A 356-amino-acid polypeptide reads, in one-letter code: MRRELLLERIDKLKATMPWYILEYYQSKLAVPYSFTTLYEYLKEYDRFFNWVLESGITNASHIAEIPLSVLENMTKKDMEAFILYLRERPLLNANTTQNGVSQTTINRTLSALSSLYKYLTEEVENEQGEPYFYRNVMKKVATKKKKETLAARAENIKQKLFLGDETEEFLQYIDREYPKKLSNRALSSFNKNKERDLAIIALLLASGVRLSEAVNLDLKDINLKMMVIEVTRKGGKRDSVNVAAFAKPYLEEYLSIRSKRYKAEKTDTAFFLTEYRGTPNRIDASSVEKMVAKYSEDFKVRVTPHKLRHTLATRLYDATKSQVLVSHQLGHASTQVTDLYTHIVNDEQKNALNKL.

One can recognise a Core-binding (CB) domain in the interval 16 to 121 (TMPWYILEYY…ALSSLYKYLT (106 aa)). The region spanning 169–354 (EFLQYIDREY…VNDEQKNALN (186 aa)) is the Tyr recombinase domain. Catalysis depends on residues arginine 210, lysine 234, histidine 306, arginine 309, and histidine 332. Tyrosine 341 acts as the O-(3'-phospho-DNA)-tyrosine intermediate in catalysis.

Belongs to the 'phage' integrase family. XerS subfamily.

It is found in the cytoplasm. FtsK is required for recombination. In terms of biological role, site-specific tyrosine recombinase, which acts by catalyzing the cutting and rejoining of the recombining DNA molecules. Essential to convert dimers of the bacterial chromosome into monomers to permit their segregation at cell division. The sequence is that of Tyrosine recombinase XerS from Streptococcus gordonii (strain Challis / ATCC 35105 / BCRC 15272 / CH1 / DL1 / V288).